Reading from the N-terminus, the 386-residue chain is uncharacterized protein (386 aa).

The disordered stretch occupies residues 355-386; sequence PSEAQKVQVKSNKKPPIAPKPEHLKKRDHGLC. The span at 377-386 shows a compositional bias: basic residues; it reads HLKKRDHGLC.

This is an uncharacterized protein from Rickettsia prowazekii (strain Madrid E).